We begin with the raw amino-acid sequence, 1391 residues long: MEARSRSAEELRRAELVEIIVETEAQTGVSGFNVAGGGKEGIFVRELREDSPAAKSLSLQEGDQLLSARVFFENFKYEDALRLLQCAEPYKVSFCLKRTVPTGDLALRPGTVSGYEMKGPRAKVAKLNIQSLAPVKKKKMVTGALGTPADLAPVDVEFSFPKFSRLRRGLKAEAVKGPVPAAPARRRLQLPRLRVREVAEEAQVARMAAAAPPPRKAKAEAEAATGAGFTAPQIELVGPRLPSAEVGVPQVSVPKGTPSTEAASGFALHLPTLGLGAPAAPAVEPPATGIQVPQVELPTLPSLPTLPTLPCLDTQEGAAVVKVPTLDVAAPSMGVDLALPGAEVEAQGEVPEVALKMPRLSFPRFGIRGKEATEAKVVKGSPEAKAKGPRLRMPTFGLSLLEPRPSGPEAVAESKLKLPTLKMPSFGIGVAGPEVKAPTGPEVKLPKVPEVKLPKVPEAAIPDVQLPEVQLPKMSDMKLPKIPEMVVPDVRLPEVQLPKVPEMKVPEMKLPKWPEMAVPDVHLPDVQLPKVPEMKLPKVPEMAVPDVHLPDVQLPKVPEMKLPEMKLPKVPEMAVPDVRLPEVQLPKVSEVKLPKMPEMAVPDVHLPELQLPKMSEVKLPKMPEMAVPDVRLPEVQLPKVSEMKLPKMPEMTMPDIRLPEVQLPKVPDIKLPEMKLPEIKLPKVPDMAVPDVPLPELQLPKVSDIRLPEMQVSQVPEVQLPKMPEMKLSKVPEVQRKSAGAEQAKGTEFSFKLPKMTMPKLGKVGKPGEASIEVPDKLMTLPCLQPEVGTEASHVGVPSLSLPSVELDLPGALGLEGQVQEAVPGKVEKPEGPRVAVGVGEVGFRVPSVEIVTPQLPTVEVEKEQLEMVEMKVKPSSKFSLPKFGLSGPKAVKGEVEGPGRATKLKVSKFTISLPKARAGTEAEAKGAGEAGLLPALDLSIPQLSLDAQLPSGKVEVADSKPKSSRFALPKFGVKGRDSEADVLVAGEAELEGKGWGWDGKVKMPKLKMPSFGLSRGKEAETQDGRVSPGEKLEAIAGQLKIPAVELVTPGAQETEKVTSGVKPSGLQVSTTGQVVAEGQESVQRVSTLGISLPQVELASFGEAGPEIVAPSAEGTAGSRVQVPQVMLELPGTQVAGGDLLVGEGIFKMPTVTVPQLELDVGLGHEAQAGEAAKSEGGIKLKLPTLGTGSRGEGVEPQGPEAQRTFHLSLPDVELTSPVSSHAEYQVVEGDGDGGHKLKVRLPLFGLAKAKEGIEVGEKVKSPKLRLPRVGFSQSESVSGEGSPSPEEEEEGSGEGASSRRGRVRVRLPRVGLASPSKVSKGQEGDATSKSPVGEKSPKFRFPRVSLSPKARSGSRDREEGGFRVRLPSVGFSETAVPGSTRIEGTQAAAI.

Ser7 carries the post-translational modification Phosphoserine. The region spanning 16 to 99 (LVEIIVETEA…YKVSFCLKRT (84 aa)) is the PDZ domain. Positions 70-84 (VFFENFKYEDALRLL) match the Nuclear export signal motif. The Nuclear localization signal signature appears at 118–196 (KGPRAKVAKL…RLQLPRLRVR (79 aa)). Position 243 is a phosphoserine (Ser243). Tandem repeats lie at residues 432 to 436 (GPEVK), 440 to 444 (GPEVK), 448 to 452 (VPEVK), 456 to 460 (VPEAA), 464 to 468 (VQLPE), 469 to 473 (VQLPK), 474 to 478 (MSDMK), 482 to 486 (IPEMV), 487 to 491 (VPDVR), 495 to 499 (VQLPK), 500 to 504 (VPEMK), and 508 to 512 (MKLPK). Positions 432–719 (GPEVKAPTGP…MQVSQVPEVQ (288 aa)) are 45 X 5 AA approximate tandem repeats of [LVMGIED]-[PQSKHARMI]-[EDKLVTR]-[LIVMAP]-[AQKHRPEVSD]; that may have a tripeptide spacer of [LVIDEA]-[PMSVI]-[KEATDQ]. One copy of the 13; approximate repeat lies at 513–517 (WPEMA). Tandem repeats lie at residues 521–525 (VHLPD), 526–530 (VQLPK), 534–538 (MKLPK), 539–543 (VPEMA), 547–551 (VHLPD), 552–556 (VQLPK), 560–564 (MKLPE), 565–569 (MKLPK), 573–577 (MAVPD), 578–582 (VRLPE), 583–587 (VQLPK), 591–595 (VKLPK), 596–600 (MPEMA), 601–605 (VPDVH), 609–613 (LQLPK), 614–618 (MSEVK), 619–623 (LPKMP), 627–631 (VPDVR), 632–636 (LPEVQ), 637–641 (LPKVS), 645–649 (LPKMP), 650–654 (EMTMP), 655–659 (DIRLP), 663–667 (LPKVP), 671–675 (LPEMK), 676–680 (LPEIK), 684–688 (VPDMA), 689–693 (VPDVP), 697–701 (LQLPK), 702–706 (VSDIR), 707–711 (LPEMQ), and 715–719 (VPEVQ). Phosphoserine occurs at positions 848, 979, 1028, 1279, 1283, 1285, 1293, 1331, and 1337. Positions 1267–1366 (LPRVGFSQSE…DREEGGFRVR (100 aa)) are disordered. The span at 1275–1285 (SESVSGEGSPS) shows a compositional bias: low complexity. Positions 1354-1363 (GSRDREEGGF) are enriched in basic and acidic residues. Ser1369 carries the post-translational modification Phosphoserine.

The protein belongs to the periaxin family. In terms of assembly, homodimer (via PDZ domain). Interacts with SCN10A. Found in a complex with SCN10A. Interacts with DRP2. Identified in a dystroglycan complex that contains at least PRX, DRP2, UTRN, DMD and DAG1. Detected in a complex composed of at least EZR, AHNAK, PPL and PRX. Identified in a complex with EZR, AHNAK, BFSP1, BFSP2, ANK2, PLEC, VIM and spectrin. As to expression, detected in myelinating Schwann cells in intramuscular nerves in triangularis sterni. Detected in sciatic nerve. Detected in eye lens fiber cells. Isoform 1 is detected in myelinating Schwann cells in sciatic nerve. Isoform 2 is detected in myelinating Schwann cells in sciatic nerve (at protein level). Detected in sciatic nerve.

It is found in the cell membrane. The protein resides in the cell junction. It localises to the nucleus. Its subcellular location is the cytoplasm. Scaffolding protein that functions as part of a dystroglycan complex in Schwann cells, and as part of EZR and AHNAK-containing complexes in eye lens fiber cells. Required for the maintenance of the peripheral myelin sheath that is essential for normal transmission of nerve impulses and normal perception of sensory stimuli. Required for normal transport of MBP mRNA from the perinuclear to the paranodal regions. Required for normal remyelination after nerve injury. Required for normal elongation of Schwann cells and normal length of the internodes between the nodes of Ranvier. The demyelinated nodes of Ranvier permit saltatory transmission of nerve impulses; shorter internodes cause slower transmission of nerve impulses. Required for the formation of appositions between the abaxonal surface of the myelin sheath and the Schwann cell plasma membrane; the Schwann cell cytoplasm is restricted to regions between these appositions. Required for the formation of Cajal bands and of Schmidt-Lanterman incisures that correspond to short, cytoplasm-filled regions on myelinated nerves. Recruits DRP2 to the Schwann cell plasma membrane. Required for normal protein composition of the eye lens fiber cell plasma membrane and normal eye lens fiber cell morphology. The sequence is that of Periaxin (Prx) from Mus musculus (Mouse).